Consider the following 483-residue polypeptide: Replication factor C large subunit (483 aa).

Residue 44–51 participates in ATP binding; it reads GSPGVGKT. The disordered stretch occupies residues 415 to 483; that stretch reads AVDHGGGIFA…DGQAGLSDFM (69 aa). Acidic residues predominate over residues 430–443; that stretch reads AQSDTESDDDDDGD. Basic and acidic residues predominate over residues 451-463; the sequence is DEPKEESVNREQS.

The protein belongs to the activator 1 small subunits family. RfcL subfamily. In terms of assembly, heteromultimer composed of small subunits (RfcS) and large subunits (RfcL).

Functionally, part of the RFC clamp loader complex which loads the PCNA sliding clamp onto DNA. The protein is Replication factor C large subunit of Natronomonas pharaonis (strain ATCC 35678 / DSM 2160 / CIP 103997 / JCM 8858 / NBRC 14720 / NCIMB 2260 / Gabara) (Halobacterium pharaonis).